Consider the following 415-residue polypeptide: Esterase FrsA (415 aa).

The protein belongs to the FrsA family.

It catalyses the reaction a carboxylic ester + H2O = an alcohol + a carboxylate + H(+). In terms of biological role, catalyzes the hydrolysis of esters. The polypeptide is Esterase FrsA (Vibrio parahaemolyticus serotype O3:K6 (strain RIMD 2210633)).